Reading from the N-terminus, the 147-residue chain is Riboflavin kinase (147 aa).

Residue 15 to 20 (GLGEGR) coordinates CDP. Residues Thr44 and Asn46 each contribute to the Mg(2+) site. The FMN site is built by Thr97 and Glu104. 109-112 (TELR) lines the CDP pocket.

The protein belongs to the archaeal riboflavin kinase family. Mg(2+) is required as a cofactor.

The catalysed reaction is riboflavin + CTP = CDP + FMN + H(+). It participates in cofactor biosynthesis; FMN biosynthesis; FMN from riboflavin (CTP route): step 1/1. Functionally, catalyzes the CTP-dependent phosphorylation of riboflavin (vitamin B2) to form flavin mononucleotide (FMN). This Methanopyrus kandleri (strain AV19 / DSM 6324 / JCM 9639 / NBRC 100938) protein is Riboflavin kinase.